Reading from the N-terminus, the 383-residue chain is Cytochrome b (383 aa).

The next 4 membrane-spanning stretches (helical) occupy residues 32–52 (FGSL…FLAM), 76–98 (WLIR…CHIA), 113–133 (TWSI…LGYV), and 179–199 (FFSL…AHMI). The heme b site is built by H82 and H96. Heme b-binding residues include H183 and H197. H202 provides a ligand contact to a ubiquinone. 4 consecutive transmembrane segments (helical) span residues 225–245 (FIFK…IFVC), 289–309 (LLGV…PLTD), 321–341 (LMKL…WIGA), and 348–368 (YLEV…FIVP).

This sequence belongs to the cytochrome b family. Fungal cytochrome b-c1 complex contains 10 subunits; 3 respiratory subunits, 2 core proteins and 5 low-molecular weight proteins. Cytochrome b-c1 complex is a homodimer. The cofactor is heme b.

The protein localises to the mitochondrion inner membrane. Component of the ubiquinol-cytochrome c reductase complex (complex III or cytochrome b-c1 complex) that is part of the mitochondrial respiratory chain. The b-c1 complex mediates electron transfer from ubiquinol to cytochrome c. Contributes to the generation of a proton gradient across the mitochondrial membrane that is then used for ATP synthesis. This chain is Cytochrome b (cob), found in Schizophyllum commune (Split gill fungus).